Here is a 165-residue protein sequence, read N- to C-terminus: Chorismate pyruvate-lyase (165 aa).

Positions 35, 77, 115, and 156 each coordinate substrate.

This sequence belongs to the UbiC family. Monomer.

The protein resides in the cytoplasm. It carries out the reaction chorismate = 4-hydroxybenzoate + pyruvate. The protein operates within cofactor biosynthesis; ubiquinone biosynthesis. Its function is as follows. Removes the pyruvyl group from chorismate, with concomitant aromatization of the ring, to provide 4-hydroxybenzoate (4HB) for the ubiquinone pathway. In Shigella sonnei (strain Ss046), this protein is Chorismate pyruvate-lyase.